A 309-amino-acid polypeptide reads, in one-letter code: Mitochondrial import receptor subunit TOM34 (309 aa).

TPR repeat units follow at residues valine 9–glutamine 42, serine 51–serine 84, and lysine 86–valine 118. Residue serine 160 is modified to Phosphoserine. The disordered stretch occupies residues leucine 161–aspartate 189. Residues glutamate 164–threonine 178 are compositionally biased toward basic and acidic residues. Serine 186 carries the post-translational modification Phosphoserine. TPR repeat units follow at residues alanine 193 to glutamate 226, serine 227 to asparagine 260, and lysine 262 to asparagine 294. Lysine 197 participates in a covalent cross-link: Glycyl lysine isopeptide (Lys-Gly) (interchain with G-Cter in SUMO2).

Belongs to the Tom34 family. In terms of assembly, interacts with HSP90A, VCP, ATP6V1D, KIAA0665, AMPK, and DMAP1 through its TPR repeat.

The protein resides in the cytoplasm. It is found in the mitochondrion outer membrane. Its function is as follows. Plays a role in the import of cytosolically synthesized preproteins into mitochondria. Binds the mature portion of precursor proteins. Interacts with cellular components, and possesses weak ATPase activity. May be a chaperone-like protein that helps to keep newly synthesized precursors in an unfolded import compatible state. The polypeptide is Mitochondrial import receptor subunit TOM34 (TOMM34) (Pongo abelii (Sumatran orangutan)).